Consider the following 305-residue polypeptide: MLLYVTLILGCWSAFSESAETDVAERANKRPIWIMGHMVNAIYQIDEFVNLGANSIETDVSFDKDANPEYTYHGVPCDCGRSCLKWEYFSDFLKGLRKATTPGDSKYHAKLVLVVFDLKTGSLYDNQAYDAGKKLAKNLLKHYWNNGNNGGRAYIVLSIPDLNHYKLITGFKETLKSEGHPELMDKVGHDFSGNDAIGDVGNAYKKAGVTGHVWQSDGITNCLLRGLSRVKEAVKNRDSSNGFINKVYYWTVDKRATTREALDAGVDGVMTNYPDVITDVLNESAYKAKFRIATYDDNPWETFKN.

An N-terminal signal peptide occupies residues 1–18; the sequence is MLLYVTLILGCWSAFSES. Residues 19-26 constitute a propeptide that is removed on maturation; that stretch reads AETDVAER. Residue His37 is part of the active site. Mg(2+)-binding residues include Glu57 and Asp59. The active-site Nucleophile is His73. 2 disulfides stabilise this stretch: Cys77/Cys83 and Cys79/Cys222. Asp117 serves as a coordination point for Mg(2+). A glycan (N-linked (GlcNAc...) asparagine) is linked at Asn282.

It belongs to the arthropod phospholipase D family. Class II subfamily. Class IIa sub-subfamily. It depends on Mg(2+) as a cofactor. In terms of tissue distribution, expressed by the venom gland.

The protein localises to the secreted. The catalysed reaction is an N-(acyl)-sphingosylphosphocholine = an N-(acyl)-sphingosyl-1,3-cyclic phosphate + choline. The enzyme catalyses an N-(acyl)-sphingosylphosphoethanolamine = an N-(acyl)-sphingosyl-1,3-cyclic phosphate + ethanolamine. It carries out the reaction a 1-acyl-sn-glycero-3-phosphocholine = a 1-acyl-sn-glycero-2,3-cyclic phosphate + choline. It catalyses the reaction a 1-acyl-sn-glycero-3-phosphoethanolamine = a 1-acyl-sn-glycero-2,3-cyclic phosphate + ethanolamine. Inhibited with low affinity by edelfosine. Dermonecrotic toxins cleave the phosphodiester linkage between the phosphate and headgroup of certain phospholipids (sphingolipid and lysolipid substrates), forming an alcohol (often choline) and a cyclic phosphate. This toxin acts on sphingomyelin (SM). It also acts on a broad range of lysophospholipids, like lysophosphatidylinositol (LPI), lysophosphatidylglycerol (LPG), lysophosphatidylethanolamine (LPE), lysobisphosphatidic acid (LBPA), lysophosphatidylserine (LPS) and lysophosphatidylcholines (LPC) of varying chain lengths. The substrate preference is LPI &gt; LPG &gt; LPS &gt; LPC &gt;&gt; LPE, LBPA. Furthermore, the enzyme also act on cyclic phosphatidic acid and lyso-platelet activating factor (LPAF, an alkyl-LPC). The enzyme does not act on sphingosylphosphorylcholine (SPC, also known as lyso-sphingomyelin) and PAF. The toxin may also act on ceramide phosphoethanolamine (CPE). It acts by transphosphatidylation, releasing exclusively cyclic phosphate products as second products. It does not exhibit detectable PLA1/2 activity. It induces dose-dependent hemolysis and dermonecrosis. Also induces increased vascular permeability, edema, inflammatory response, and platelet aggregation. This chain is Dermonecrotic toxin LrSicTox-alphaIA1ii, found in Loxosceles reclusa (Brown recluse spider).